The primary structure comprises 258 residues: Allene oxide cyclase 3, chloroplastic (258 aa).

Residues 1–56 (MASSSAAMSLESISMTTLNNLSRNHQSHRSSLLGFSRSFQNLGISSNGPDFSSRSR) constitute a chloroplast transit peptide.

Belongs to the allene oxide cyclase family. Highly expressed in fully developed leaves.

It localises to the plastid. The protein localises to the chloroplast. It catalyses the reaction (9Z,13S,15Z)-12,13-epoxyoctadeca-9,11,15-trienoate = (9S,13S,15Z)-12-oxophyto-10,15-dienoate. In terms of biological role, involved in the production of 12-oxo-phytodienoic acid (OPDA), a precursor of jasmonic acid. This is Allene oxide cyclase 3, chloroplastic (AOC3) from Arabidopsis thaliana (Mouse-ear cress).